The primary structure comprises 505 residues: uncharacterized protein (505 aa).

Positions 461-480 are disordered; it reads RTDVHPGNSDDEGAYSSADS.

It to M.jannaschii MJ0787.

This is an uncharacterized protein from Methanothermobacter thermautotrophicus (strain ATCC 29096 / DSM 1053 / JCM 10044 / NBRC 100330 / Delta H) (Methanobacterium thermoautotrophicum).